We begin with the raw amino-acid sequence, 121 residues long: Large ribosomal subunit protein bL12 (121 aa).

It belongs to the bacterial ribosomal protein bL12 family. Homodimer. Part of the ribosomal stalk of the 50S ribosomal subunit. Forms a multimeric L10(L12)X complex, where L10 forms an elongated spine to which 2 to 4 L12 dimers bind in a sequential fashion. Binds GTP-bound translation factors.

Functionally, forms part of the ribosomal stalk which helps the ribosome interact with GTP-bound translation factors. Is thus essential for accurate translation. The polypeptide is Large ribosomal subunit protein bL12 (Shewanella piezotolerans (strain WP3 / JCM 13877)).